We begin with the raw amino-acid sequence, 591 residues long: Aspartate--tRNA ligase (591 aa).

Residue E172 participates in L-aspartate binding. The interval 196 to 199 is aspartate; sequence QLFK. L-aspartate is bound at residue R218. ATP-binding positions include 218-220 and Q227; that span reads RDE. H449 is a binding site for L-aspartate. Position 483 (E483) interacts with ATP. R490 contacts L-aspartate. 535 to 538 is a binding site for ATP; it reads GLDR.

Belongs to the class-II aminoacyl-tRNA synthetase family. Type 1 subfamily. As to quaternary structure, homodimer.

Its subcellular location is the cytoplasm. It catalyses the reaction tRNA(Asp) + L-aspartate + ATP = L-aspartyl-tRNA(Asp) + AMP + diphosphate. Its function is as follows. Catalyzes the attachment of L-aspartate to tRNA(Asp) in a two-step reaction: L-aspartate is first activated by ATP to form Asp-AMP and then transferred to the acceptor end of tRNA(Asp). This Actinobacillus pleuropneumoniae serotype 7 (strain AP76) protein is Aspartate--tRNA ligase.